Here is a 439-residue protein sequence, read N- to C-terminus: 3-phosphoshikimate 1-carboxyvinyltransferase (439 aa).

Positions 25, 26, and 30 each coordinate 3-phosphoshikimate. Lys25 is a binding site for phosphoenolpyruvate. Positions 96 and 124 each coordinate phosphoenolpyruvate. 6 residues coordinate 3-phosphoshikimate: Ser170, Ser171, Gln172, Ser202, Asp324, and Lys351. Gln172 lines the phosphoenolpyruvate pocket. Residue Asp324 is the Proton acceptor of the active site. Residues Arg355, Arg399, and Lys424 each contribute to the phosphoenolpyruvate site.

Belongs to the EPSP synthase family. In terms of assembly, monomer.

The protein resides in the cytoplasm. It carries out the reaction 3-phosphoshikimate + phosphoenolpyruvate = 5-O-(1-carboxyvinyl)-3-phosphoshikimate + phosphate. The protein operates within metabolic intermediate biosynthesis; chorismate biosynthesis; chorismate from D-erythrose 4-phosphate and phosphoenolpyruvate: step 6/7. Functionally, catalyzes the transfer of the enolpyruvyl moiety of phosphoenolpyruvate (PEP) to the 5-hydroxyl of shikimate-3-phosphate (S3P) to produce enolpyruvyl shikimate-3-phosphate and inorganic phosphate. The protein is 3-phosphoshikimate 1-carboxyvinyltransferase of Bordetella avium (strain 197N).